The following is a 323-amino-acid chain: Lipoyl synthase (323 aa).

[4Fe-4S] cluster-binding residues include Cys61, Cys66, Cys72, Cys87, Cys91, Cys94, and Ser300. In terms of domain architecture, Radical SAM core spans Trp73 to Leu289.

This sequence belongs to the radical SAM superfamily. Lipoyl synthase family. Requires [4Fe-4S] cluster as cofactor.

It is found in the cytoplasm. It carries out the reaction [[Fe-S] cluster scaffold protein carrying a second [4Fe-4S](2+) cluster] + N(6)-octanoyl-L-lysyl-[protein] + 2 oxidized [2Fe-2S]-[ferredoxin] + 2 S-adenosyl-L-methionine + 4 H(+) = [[Fe-S] cluster scaffold protein] + N(6)-[(R)-dihydrolipoyl]-L-lysyl-[protein] + 4 Fe(3+) + 2 hydrogen sulfide + 2 5'-deoxyadenosine + 2 L-methionine + 2 reduced [2Fe-2S]-[ferredoxin]. Its pathway is protein modification; protein lipoylation via endogenous pathway; protein N(6)-(lipoyl)lysine from octanoyl-[acyl-carrier-protein]: step 2/2. Its function is as follows. Catalyzes the radical-mediated insertion of two sulfur atoms into the C-6 and C-8 positions of the octanoyl moiety bound to the lipoyl domains of lipoate-dependent enzymes, thereby converting the octanoylated domains into lipoylated derivatives. The polypeptide is Lipoyl synthase (Rhizobium etli (strain CIAT 652)).